We begin with the raw amino-acid sequence, 318 residues long: DNA primase small subunit PriS (318 aa).

Catalysis depends on residues aspartate 95, aspartate 97, and aspartate 224.

This sequence belongs to the eukaryotic-type primase small subunit family. In terms of assembly, heterodimer of a small subunit (PriS) and a large subunit (PriL). Mg(2+) serves as cofactor. It depends on Mn(2+) as a cofactor.

Catalytic subunit of DNA primase, an RNA polymerase that catalyzes the synthesis of short RNA molecules used as primers for DNA polymerase during DNA replication. The small subunit contains the primase catalytic core and has DNA synthesis activity on its own. Binding to the large subunit stabilizes and modulates the activity, increasing the rate of DNA synthesis while decreasing the length of the DNA fragments, and conferring RNA synthesis capability. The DNA polymerase activity may enable DNA primase to also catalyze primer extension after primer synthesis. May also play a role in DNA repair. The polypeptide is DNA primase small subunit PriS (Sulfurisphaera tokodaii (strain DSM 16993 / JCM 10545 / NBRC 100140 / 7) (Sulfolobus tokodaii)).